Reading from the N-terminus, the 173-residue chain is Ribosome maturation factor RimM (173 aa).

In terms of domain architecture, PRC barrel spans glutamate 95–leucine 169.

Belongs to the RimM family. In terms of assembly, binds ribosomal protein uS19.

Its subcellular location is the cytoplasm. In terms of biological role, an accessory protein needed during the final step in the assembly of 30S ribosomal subunit, possibly for assembly of the head region. Essential for efficient processing of 16S rRNA. May be needed both before and after RbfA during the maturation of 16S rRNA. It has affinity for free ribosomal 30S subunits but not for 70S ribosomes. The sequence is that of Ribosome maturation factor RimM from Lactobacillus gasseri (strain ATCC 33323 / DSM 20243 / BCRC 14619 / CIP 102991 / JCM 1131 / KCTC 3163 / NCIMB 11718 / NCTC 13722 / AM63).